The primary structure comprises 189 residues: MTIKSDRWISRMAAEKGMIEPFQPGQVRADENGEKLISYGVSSYGYDVRCADEFKVFTNIHSATVDPKAFDERSFVDVKGEYCIIPPNSFALARTVEYFRIPRNVLTICLGKSTYARCGIIVNVTPLEPEWEGHVTLEFSNTTTLPAKIYAHEGVAQMLFFESDEVCETSYMDRGGKYQGQRGVTLPRA.

DCTP contacts are provided by residues Lys-112–Arg-117, Thr-136–Glu-138, Gln-157, Tyr-171, and Gln-181. Glu-138 (proton donor/acceptor) is an active-site residue.

The protein belongs to the dCTP deaminase family. In terms of assembly, homotrimer.

The enzyme catalyses dCTP + H2O + H(+) = dUTP + NH4(+). Its pathway is pyrimidine metabolism; dUMP biosynthesis; dUMP from dCTP (dUTP route): step 1/2. In terms of biological role, catalyzes the deamination of dCTP to dUTP. This is dCTP deaminase from Alcanivorax borkumensis (strain ATCC 700651 / DSM 11573 / NCIMB 13689 / SK2).